The sequence spans 193 residues: Ion-translocating oxidoreductase complex subunit A (193 aa).

Helical transmembrane passes span 5 to 25 (LLLL…FLGL), 39 to 59 (IGMG…SYLM), 63 to 83 (ILIP…VIAV), 102 to 122 (LLGI…VALL), 134 to 154 (IIYG…FAAM), and 171 to 191 (SIAM…TGLI).

The protein belongs to the NqrDE/RnfAE family. The complex is composed of six subunits: RnfA, RnfB, RnfC, RnfD, RnfE and RnfG.

It localises to the cell inner membrane. Functionally, part of a membrane-bound complex that couples electron transfer with translocation of ions across the membrane. This is Ion-translocating oxidoreductase complex subunit A from Aeromonas hydrophila subsp. hydrophila (strain ATCC 7966 / DSM 30187 / BCRC 13018 / CCUG 14551 / JCM 1027 / KCTC 2358 / NCIMB 9240 / NCTC 8049).